The primary structure comprises 166 residues: MKVLILSADGFEDLELIYPLHRIKEEGHEVYVASFQRGKITGKHGYTVNVDLAFDEVDPDEFDALVLPGGRAPEIVRLNEKAVAITKKMFEDGKPVASICHGPQILISAGVLKGRKGTSTVTIRDDVKNAGAEWIDAEVVVDGNWVSSRHPGDLYAWMREFVKLLR.

One can recognise a PfpI endopeptidase domain in the interval methionine 1 to arginine 166. Histidine 101 is a catalytic residue.

It belongs to the peptidase C56 family. In terms of assembly, homohexamer formed by a dimer of trimers that assemble into a hollow ring structure.

It localises to the cytoplasm. It catalyses the reaction N(omega)-(1-hydroxy-2-oxopropyl)-L-arginyl-[protein] + H2O = lactate + L-arginyl-[protein] + H(+). It carries out the reaction N(6)-(1-hydroxy-2-oxopropyl)-L-lysyl-[protein] + H2O = lactate + L-lysyl-[protein] + H(+). The catalysed reaction is S-(1-hydroxy-2-oxopropyl)-L-cysteinyl-[protein] + H2O = lactate + L-cysteinyl-[protein] + H(+). The enzyme catalyses N(omega)-(1-hydroxy-2-oxoethyl)-L-arginyl-[protein] + H2O = L-arginyl-[protein] + glycolate + H(+). It catalyses the reaction N(6)-(1-hydroxy-2-oxoethyl)-L-lysyl-[protein] + H2O = glycolate + L-lysyl-[protein] + H(+). It carries out the reaction S-(1-hydroxy-2-oxoethyl)-L-cysteinyl-[protein] + H2O = glycolate + L-cysteinyl-[protein] + H(+). Functionally, deglycase that catalyzes the deglycation of the Maillard adducts formed between amino groups of proteins and reactive carbonyl groups of glyoxals. Thus, functions as a protein deglycase that repairs methylglyoxal- and glyoxal-glycated proteins, and releases repaired proteins and lactate or glycolate, respectively. Deglycates cysteine, arginine and lysine residues in proteins, and thus reactivates these proteins by reversing glycation by glyoxals. Acts on early glycation intermediates (hemithioacetals and aminocarbinols), preventing the formation of advanced glycation endproducts (AGE) that cause irreversible damage. Also displays proteolytic activity. In Thermococcus kodakarensis (strain ATCC BAA-918 / JCM 12380 / KOD1) (Pyrococcus kodakaraensis (strain KOD1)), this protein is Deglycase TK1284.